A 219-amino-acid chain; its full sequence is MQPSFWHDKWDAQQVGFHLSAVNPLLVKYWPQLELDANAQVFVPLCGKSLDMCFLAEQGHEVLGCELNELAVQQFYRENELAFDISTLAEHQRFHTEQVTIYQGDIFSLDAAEMPNTQAFYDRAALIAWPEEMRSAYARQLAKLVPANSTGLLITLDYPQAELNGPPFAVSDDWVQANLATDFEIERLSSEDVLSENPRFVNKQVSWLTESVYKLIRKG.

Residues Trp-10, Leu-45, Glu-66, and Arg-123 each coordinate S-adenosyl-L-methionine.

The protein belongs to the class I-like SAM-binding methyltransferase superfamily. TPMT family.

It is found in the cytoplasm. The enzyme catalyses S-adenosyl-L-methionine + a thiopurine = S-adenosyl-L-homocysteine + a thiopurine S-methylether.. This chain is Thiopurine S-methyltransferase, found in Shewanella pealeana (strain ATCC 700345 / ANG-SQ1).